We begin with the raw amino-acid sequence, 62 residues long: Photosystem II reaction center protein Z (62 aa).

Transmembrane regions (helical) follow at residues 8–28 and 41–61; these read ALLL…VLYA and LVGG…NYFV.

The protein belongs to the PsbZ family. As to quaternary structure, PSII is composed of 1 copy each of membrane proteins PsbA, PsbB, PsbC, PsbD, PsbE, PsbF, PsbH, PsbI, PsbJ, PsbK, PsbL, PsbM, PsbT, PsbX, PsbY, PsbZ, Psb30/Ycf12, peripheral proteins PsbO, CyanoQ (PsbQ), PsbU, PsbV and a large number of cofactors. It forms dimeric complexes.

The protein resides in the cellular thylakoid membrane. Its function is as follows. May control the interaction of photosystem II (PSII) cores with the light-harvesting antenna, regulates electron flow through the 2 photosystem reaction centers. PSII is a light-driven water plastoquinone oxidoreductase, using light energy to abstract electrons from H(2)O, generating a proton gradient subsequently used for ATP formation. The chain is Photosystem II reaction center protein Z from Synechococcus elongatus (strain ATCC 33912 / PCC 7942 / FACHB-805) (Anacystis nidulans R2).